A 445-amino-acid chain; its full sequence is C4-dicarboxylate transport protein (445 aa).

8 helical membrane-spanning segments follow: residues 24-44, 62-82, 105-125, 163-183, 201-221, 237-257, 322-342, and 370-390; these read VLYVQVLIAIVLGVLLGWVSP, LIKMVIAPIIFCTVVSGIAHI, FALILGLIVGNLVPVGHGLAA, GDILQVLLFAILFGFALMALG, FGVIAIVMKAAPVGAFGAMAF, LVALFYATAALFVFVVLGLIA, IYMTLATLFIAQALGIELTFT, and AGTLAAVNPALVPGMAIVFSI.

The protein belongs to the dicarboxylate/amino acid:cation symporter (DAACS) (TC 2.A.23) family.

It is found in the cell inner membrane. Functionally, responsible for the transport of dicarboxylates such as succinate, fumarate, and malate from the periplasm across the membrane. The polypeptide is C4-dicarboxylate transport protein (Rhodopseudomonas palustris (strain BisB5)).